The sequence spans 317 residues: D-alanine--D-alanine ligase (317 aa).

An ATP-grasp domain is found at lysine 104 to alanine 303. ATP is bound at residue proline 130–threonine 185. The Mg(2+) site is built by aspartate 257, glutamate 270, and asparagine 272.

Belongs to the D-alanine--D-alanine ligase family. Mg(2+) serves as cofactor. The cofactor is Mn(2+).

It is found in the cytoplasm. The catalysed reaction is 2 D-alanine + ATP = D-alanyl-D-alanine + ADP + phosphate + H(+). It functions in the pathway cell wall biogenesis; peptidoglycan biosynthesis. Functionally, cell wall formation. The chain is D-alanine--D-alanine ligase from Bordetella avium (strain 197N).